The chain runs to 249 residues: ATP synthase subunit a, chloroplastic (249 aa).

5 consecutive transmembrane segments (helical) span residues 40–60, 97–117, 136–156, 201–221, and 222–242; these read QVLITSWVVIAILLGSAVLVV, VPFIGTLFLFIFVSNWSGALL, INTTVALALLTSVAYFYAGLS, LVVVVLVSLVPLVVPIPVMFL, and GLFTSGIQALIFATLAAAYIG.

This sequence belongs to the ATPase A chain family. As to quaternary structure, F-type ATPases have 2 components, CF(1) - the catalytic core - and CF(0) - the membrane proton channel. CF(1) has five subunits: alpha(3), beta(3), gamma(1), delta(1), epsilon(1). CF(0) has four main subunits: a, b, b' and c.

The protein localises to the plastid. It is found in the chloroplast thylakoid membrane. Functionally, key component of the proton channel; it plays a direct role in the translocation of protons across the membrane. The polypeptide is ATP synthase subunit a, chloroplastic (Aethionema grandiflorum (Persian stone-cress)).